A 247-amino-acid chain; its full sequence is Cell division protein ZapD (247 aa).

The protein belongs to the ZapD family. Interacts with FtsZ.

Its subcellular location is the cytoplasm. In terms of biological role, cell division factor that enhances FtsZ-ring assembly. Directly interacts with FtsZ and promotes bundling of FtsZ protofilaments, with a reduction in FtsZ GTPase activity. The sequence is that of Cell division protein ZapD from Citrobacter koseri (strain ATCC BAA-895 / CDC 4225-83 / SGSC4696).